The primary structure comprises 106 residues: 3-oxoacyl-[acyl-carrier-protein] reductase (106 aa).

This sequence belongs to the short-chain dehydrogenases/reductases (SDR) family. Homotetramer. Mesocarp.

The protein resides in the plastid. It localises to the chloroplast. It carries out the reaction a (3R)-hydroxyacyl-[ACP] + NADP(+) = a 3-oxoacyl-[ACP] + NADPH + H(+). It participates in lipid metabolism; fatty acid biosynthesis. This is 3-oxoacyl-[acyl-carrier-protein] reductase from Persea americana (Avocado).